The chain runs to 125 residues: Small ribosomal subunit protein uS12 (125 aa).

Position 89 is a 3-methylthioaspartic acid (aspartate 89).

This sequence belongs to the universal ribosomal protein uS12 family. Part of the 30S ribosomal subunit. Contacts proteins S8 and S17. May interact with IF1 in the 30S initiation complex.

Functionally, with S4 and S5 plays an important role in translational accuracy. Its function is as follows. Interacts with and stabilizes bases of the 16S rRNA that are involved in tRNA selection in the A site and with the mRNA backbone. Located at the interface of the 30S and 50S subunits, it traverses the body of the 30S subunit contacting proteins on the other side and probably holding the rRNA structure together. The combined cluster of proteins S8, S12 and S17 appears to hold together the shoulder and platform of the 30S subunit. This chain is Small ribosomal subunit protein uS12, found in Bordetella avium (strain 197N).